The chain runs to 295 residues: Ethanolamine ammonia-lyase small subunit (295 aa).

Adenosylcob(III)alamin is bound by residues valine 209 and glutamate 230.

The protein belongs to the EutC family. As to quaternary structure, the basic unit is a heterodimer which dimerizes to form tetramers. The heterotetramers trimerize; 6 large subunits form a core ring with 6 small subunits projecting outwards. The cofactor is adenosylcob(III)alamin.

It localises to the bacterial microcompartment. The enzyme catalyses ethanolamine = acetaldehyde + NH4(+). The protein operates within amine and polyamine degradation; ethanolamine degradation. Its function is as follows. Catalyzes the deamination of various vicinal amino-alcohols to oxo compounds. Allows this organism to utilize ethanolamine as the sole source of nitrogen and carbon in the presence of external vitamin B12. In Clostridium perfringens (strain ATCC 13124 / DSM 756 / JCM 1290 / NCIMB 6125 / NCTC 8237 / Type A), this protein is Ethanolamine ammonia-lyase small subunit.